The sequence spans 3187 residues: Cilia- and flagella-associated protein 47 (3187 aa).

Residues 1746–1869 (SDSERILLSW…LCVYMYERLP (124 aa)) enclose the Calponin-homology (CH) domain. The segment at 2024–2052 (KLTESRQYPKHDDDMSSSGSDTDQGCSDS) is disordered. A compositionally biased stretch (basic and acidic residues) spans 2026 to 2037 (TESRQYPKHDDD).

As to quaternary structure, interacts with CFAP65. Highly expressed in spermatzoa (at protein level).

It localises to the cytoplasm. The protein resides in the cytoskeleton. The protein localises to the flagellum basal body. Functionally, plays a role in flagellar formation and sperm motility. The chain is Cilia- and flagella-associated protein 47 from Homo sapiens (Human).